We begin with the raw amino-acid sequence, 66 residues long: Large ribosomal subunit protein bL33c (66 aa).

It belongs to the bacterial ribosomal protein bL33 family.

The protein resides in the plastid. Its subcellular location is the chloroplast. The polypeptide is Large ribosomal subunit protein bL33c (Nandina domestica (Heavenly bamboo)).